We begin with the raw amino-acid sequence, 183 residues long: uncharacterized protein (183 aa).

Residues 1-23 (MGSSFVIDRSSSSPAPPRGPAPK) form a disordered region.

This is an uncharacterized protein from Saccharomyces cerevisiae (strain ATCC 204508 / S288c) (Baker's yeast).